A 648-amino-acid polypeptide reads, in one-letter code: Golgin subfamily A member 8G (648 aa).

Over residues 1–11 the composition is skewed to pro residues; the sequence is MWPQARLPPHP. Disordered stretches follow at residues 1 to 84 and 119 to 139; these read MWPQ…SATL and NKQVEHQLEEEKKANNEKQKA. The segment covering 50–62 has biased composition (polar residues); it reads TNGSIHETATSGG. Coiled-coil stretches lie at residues 105–160, 223–275, and 318–424; these read VSQL…LNTD, LEQS…MSQE, and EVEL…QQKQ. A compositionally biased stretch (basic and acidic residues) spans 121 to 139; it reads QVEHQLEEEKKANNEKQKA. Disordered regions lie at residues 356–376, 434–461, 508–549, and 600–624; these read LREQEERLQEQQERLPEQEER, ALPGEGDGGGHLDSEGEEAPRPIPSIPQ, PITK…GVAA, and PVQGEAREGSPHDNPTAQPIVQDHQ. Over residues 441–453 the composition is skewed to basic and acidic residues; sequence GGGHLDSEGEEAP. Residues 521–534 are compositionally biased toward gly residues; the sequence is PGGGHHQAGPGQGG.

This sequence belongs to the GOLGA8 family.

This is Golgin subfamily A member 8G from Homo sapiens (Human).